Here is a 300-residue protein sequence, read N- to C-terminus: MKIGVIMGGISTEREVSLNSGREVIKYLELLEHEIIPIIIDKKEDVMEKAKGIDFAFLALHGKFGEDGTVQSVLQTLDIPYSGCGPLTSAICMDKDMTKKILKYANINTADWVNVSSVENIDYEAIEKIGYPVFVKPNSGGSSVATNLVKDKEGIKEAVELALKYDKEVMIENYTKGEEITCCMLNGKMLPVLAIRPHAEFFDYTAKYADGGSDEVVIELEENLHKKVEEMALACWKELKCEVYVRVDMIVKDGIPYVLELNTLPGMTKNSLFPKSANAVGISFAELLNSIVKYSLEVER.

Residues 99-293 (KKILKYANIN…FAELLNSIVK (195 aa)) enclose the ATP-grasp domain. Position 126 to 181 (126 to 181 (IEKIGYPVFVKPNSGGSSVATNLVKDKEGIKEAVELALKYDKEVMIENYTKGEEIT)) interacts with ATP. Mg(2+) is bound by residues aspartate 248, glutamate 260, and asparagine 262.

Belongs to the D-alanine--D-alanine ligase family. Mg(2+) is required as a cofactor. Mn(2+) serves as cofactor.

Its subcellular location is the cytoplasm. It catalyses the reaction 2 D-alanine + ATP = D-alanyl-D-alanine + ADP + phosphate + H(+). Its pathway is cell wall biogenesis; peptidoglycan biosynthesis. Functionally, cell wall formation. This Clostridium botulinum (strain ATCC 19397 / Type A) protein is D-alanine--D-alanine ligase.